Here is a 253-residue protein sequence, read N- to C-terminus: DNA repair protein RecO (253 aa).

It belongs to the RecO family.

Its function is as follows. Involved in DNA repair and RecF pathway recombination. This Dehalococcoides mccartyi (strain ATCC BAA-2266 / KCTC 15142 / 195) (Dehalococcoides ethenogenes (strain 195)) protein is DNA repair protein RecO.